The sequence spans 429 residues: Glutamate-1-semialdehyde 2,1-aminomutase (429 aa).

Residue Lys265 is modified to N6-(pyridoxal phosphate)lysine.

It belongs to the class-III pyridoxal-phosphate-dependent aminotransferase family. HemL subfamily. As to quaternary structure, homodimer. Pyridoxal 5'-phosphate is required as a cofactor.

The protein localises to the cytoplasm. It catalyses the reaction (S)-4-amino-5-oxopentanoate = 5-aminolevulinate. The protein operates within porphyrin-containing compound metabolism; protoporphyrin-IX biosynthesis; 5-aminolevulinate from L-glutamyl-tRNA(Glu): step 2/2. The sequence is that of Glutamate-1-semialdehyde 2,1-aminomutase from Shewanella piezotolerans (strain WP3 / JCM 13877).